The sequence spans 424 residues: Calreticulin (424 aa).

The first 29 residues, 1 to 29 (MAIRARSSSYAAAAVALALALASVAAVAG), serve as a signal peptide directing secretion. A glycan (N-linked (GlcNAc...) asparagine) is linked at Asn61. Residues Cys115 and Cys147 are joined by a disulfide bond. An alpha-D-glucoside is bound by residues Tyr119, Lys121, Tyr138, and Asp145. 7 consecutive repeat copies span residues 201 to 212 (KQSGSIYEHWDI), 220 to 231 (DPEAKKPEDWDD), 237 to 248 (DPEDKKPEGYDD), 255 to 266 (DPDAKKPEDWDD), 270 to 280 (GEWTAPTIPNP), 284 to 294 (GPWKQKKIKNP), and 298 to 308 (GKWKAPMIDNP). A 4 X approximate repeats region spans residues 201–266 (KQSGSIYEHW…DAKKPEDWDD (66 aa)). The span at 217–262 (QIKDPEAKKPEDWDDKEYIPDPEDKKPEGYDDIPKEIPDPDAKKPE) shows a compositional bias: basic and acidic residues. Residues 217–289 (QIKDPEAKKP…PEYKGPWKQK (73 aa)) are disordered. Residues 270–308 (GEWTAPTIPNPEYKGPWKQKKIKNPNYQGKWKAPMIDNP) are 3 X approximate repeats. Glu328 is an an alpha-D-glucoside binding site. Residues 356–385 (ETWGKHKDAEKAAFDEAEKKKEEEEAAKAG) are compositionally biased toward basic and acidic residues. The interval 356-424 (ETWGKHKDAE…DSDDEKHDEL (69 aa)) is disordered. A compositionally biased stretch (acidic residues) spans 386-401 (EDDDDLDDEDAEDEDK). The segment covering 402-424 (ADEKADSDAEDGKDSDDEKHDEL) has biased composition (basic and acidic residues). The short motif at 421–424 (HDEL) is the Prevents secretion from ER element.

It belongs to the calreticulin family. Phosphorylated.

The protein resides in the endoplasmic reticulum lumen. Functionally, molecular calcium-binding chaperone promoting folding, oligomeric assembly and quality control in the ER via the calreticulin/calnexin cycle. This lectin may interact transiently with almost all of the monoglucosylated glycoproteins that are synthesized in the ER. The chain is Calreticulin from Oryza sativa subsp. japonica (Rice).